The chain runs to 336 residues: Monoacylglycerol lipase ABHD6 (336 aa).

Topologically, residues Met-1–Met-8 are extracellular. A helical; Signal-anchor for type II membrane protein membrane pass occupies residues Phe-9–Leu-29. Residues Trp-30–Asn-336 lie on the Cytoplasmic side of the membrane. The Nucleophile role is filled by Ser-148. Residues Asp-278 and His-306 each act as charge relay system in the active site.

The protein belongs to the AB hydrolase superfamily. As to expression, widely expressed with higher expression in small intestine, liver and brown adipose tissue. In brain, expressed postsynaptically in cortical neurons but not detected in microglia (at protein level).

The protein resides in the late endosome membrane. Its subcellular location is the lysosome membrane. It is found in the mitochondrion membrane. The enzyme catalyses Hydrolyzes glycerol monoesters of long-chain fatty acids.. It catalyses the reaction 2-(5Z,8Z,11Z,14Z-eicosatetraenoyl)-glycerol + H2O = glycerol + (5Z,8Z,11Z,14Z)-eicosatetraenoate + H(+). The catalysed reaction is 1-octanoylglycerol + H2O = octanoate + glycerol + H(+). It carries out the reaction 1-decanoylglycerol + H2O = decanoate + glycerol + H(+). The enzyme catalyses 1-dodecanoylglycerol + H2O = dodecanoate + glycerol + H(+). It catalyses the reaction 1-tetradecanoylglycerol + H2O = tetradecanoate + glycerol + H(+). The catalysed reaction is 2-hexadecanoylglycerol + H2O = glycerol + hexadecanoate + H(+). It carries out the reaction 2-(9Z-octadecenoyl)-glycerol + H2O = glycerol + (9Z)-octadecenoate + H(+). The enzyme catalyses 1-(9Z-octadecenoyl)-glycerol + H2O = glycerol + (9Z)-octadecenoate + H(+). It catalyses the reaction 2-(9Z,12Z-octadecadienoyl)-glycerol + H2O = (9Z,12Z)-octadecadienoate + glycerol + H(+). The catalysed reaction is 1-(5Z,8Z,11Z,14Z-eicosatetraenoyl)-glycerol + H2O = glycerol + (5Z,8Z,11Z,14Z)-eicosatetraenoate + H(+). It carries out the reaction 1-(9Z,12Z-octadecadienoyl)-glycerol + H2O = (9Z,12Z)-octadecadienoate + glycerol + H(+). The enzyme catalyses 3-(9Z-octadecenoyl)-sn-glycero-1-phospho-(3'-(9Z-octadecenoyl)-1'-sn-glycerol) + H2O = 3-(9Z-octadecenoyl)-sn-glycero-1-phospho-(1'-sn-glycerol) + (9Z)-octadecenoate + H(+). It catalyses the reaction (S,S)-2-(9Z-octadecenoyl)-sn-glycero-1-phospho-(2'-(9Z-octadecenoyl)-1'-sn-glycerol) + H2O = (S,S)-2-(9Z-octadecenoyl)-sn-glycero-1-phospho-(1'-sn-glycerol) + (9Z)-octadecenoate + H(+). The catalysed reaction is (R,R)-2-(9Z-octadecenoyl)-sn-glycero-3-phospho-(2'-(9Z-octadecenoyl)-3'-sn-glycerol) + H2O = (R,R)-2-(9Z-octadecenoyl)-sn-glycero-3-phospho-(3'-sn-glycerol) + (9Z)-octadecenoate + H(+). Lipase that preferentially hydrolysis medium-chain saturated monoacylglycerols including 2-arachidonoylglycerol. Through 2-arachidonoylglycerol degradation may regulate endocannabinoid signaling pathways. Also has a lysophosphatidyl lipase activity with a preference for lysophosphatidylglycerol among other lysophospholipids. Also able to degrade bis(monoacylglycero)phosphate (BMP) and constitutes the major enzyme for BMP catabolism. BMP, also known as lysobisphosphatidic acid, is enriched in late endosomes and lysosomes and plays a key role in the formation of intraluminal vesicles and in lipid sorting. The sequence is that of Monoacylglycerol lipase ABHD6 from Mus musculus (Mouse).